We begin with the raw amino-acid sequence, 506 residues long: Acetaldehyde dehydrogenase 2 (506 aa).

240–245 (GETTTG) contributes to the NAD(+) binding site. Residues Glu-262 and Cys-301 contribute to the active site.

Belongs to the aldehyde dehydrogenase family.

It catalyses the reaction an aldehyde + NAD(+) + H2O = a carboxylate + NADH + 2 H(+). It participates in alcohol metabolism; ethanol degradation; acetate from ethanol: step 2/2. Its pathway is ketone degradation; acetoin degradation. Functionally, involved in the catabolism of acetoin and ethanol. This Cupriavidus necator (strain ATCC 17699 / DSM 428 / KCTC 22496 / NCIMB 10442 / H16 / Stanier 337) (Ralstonia eutropha) protein is Acetaldehyde dehydrogenase 2 (acoD).